A 232-amino-acid polypeptide reads, in one-letter code: RNA chaperone ProQ (232 aa).

The segment at 105–182 is disordered; sequence EAKARVQAQR…REEQHTPVSD (78 aa). Over residues 117-136 the composition is skewed to basic and acidic residues; the sequence is QQAKKREAAAAAGEKEDAPR. A compositionally biased stretch (basic residues) spans 137–146; that stretch reads RERKPRPTTP. The segment covering 147-177 has biased composition (basic and acidic residues); the sequence is RRKEGAERKPRSQKPVEKAPKTVKAPREEQH.

The protein belongs to the ProQ family.

The protein localises to the cytoplasm. RNA chaperone with significant RNA binding, RNA strand exchange and RNA duplexing activities. May regulate ProP activity through an RNA-based, post-transcriptional mechanism. In Escherichia coli (strain UTI89 / UPEC), this protein is RNA chaperone ProQ.